The following is a 178-amino-acid chain: Ribulose bisphosphate carboxylase small subunit, chloroplastic 4 (178 aa).

The N-terminal 54 residues, 1-54 (MASISSTVATVSRAAPAQANMVAPFTGLKSNAAFPATKKANDFSTLPSNGGRVQ), are a transit peptide targeting the chloroplast.

Belongs to the RuBisCO small chain family. As to quaternary structure, heterohexadecamer of 8 large and 8 small subunits.

Its subcellular location is the plastid. The protein localises to the chloroplast. Functionally, ruBisCO catalyzes two reactions: the carboxylation of D-ribulose 1,5-bisphosphate, the primary event in carbon dioxide fixation, as well as the oxidative fragmentation of the pentose substrate. Both reactions occur simultaneously and in competition at the same active site. Although the small subunit is not catalytic it is essential for maximal activity. The protein is Ribulose bisphosphate carboxylase small subunit, chloroplastic 4 of Flaveria pringlei.